Here is a 236-residue protein sequence, read N- to C-terminus: Sugar fermentation stimulation protein homolog (236 aa).

Belongs to the SfsA family.

The polypeptide is Sugar fermentation stimulation protein homolog (Methylobacterium nodulans (strain LMG 21967 / CNCM I-2342 / ORS 2060)).